Reading from the N-terminus, the 652-residue chain is Acetyl-coenzyme A synthetase (652 aa).

CoA-binding positions include 189-192 (RGGK) and T311. ATP is bound by residues 387–389 (GEP), 411–416 (DTWWQT), D500, and R515. S523 lines the CoA pocket. Residue R526 coordinates ATP. Mg(2+) contacts are provided by V537, H539, and V542. R584 is a binding site for CoA. N6-acetyllysine is present on K609.

The protein belongs to the ATP-dependent AMP-binding enzyme family. The cofactor is Mg(2+). Acetylated. Deacetylation by the SIR2-homolog deacetylase activates the enzyme.

It catalyses the reaction acetate + ATP + CoA = acetyl-CoA + AMP + diphosphate. Its function is as follows. Catalyzes the conversion of acetate into acetyl-CoA (AcCoA), an essential intermediate at the junction of anabolic and catabolic pathways. AcsA undergoes a two-step reaction. In the first half reaction, AcsA combines acetate with ATP to form acetyl-adenylate (AcAMP) intermediate. In the second half reaction, it can then transfer the acetyl group from AcAMP to the sulfhydryl group of CoA, forming the product AcCoA. This Bartonella henselae (strain ATCC 49882 / DSM 28221 / CCUG 30454 / Houston 1) (Rochalimaea henselae) protein is Acetyl-coenzyme A synthetase.